The sequence spans 610 residues: UvrABC system protein C (610 aa).

The GIY-YIG domain maps to 16-94; sequence SQPGVYRMYD…IKLYQPRYNV (79 aa). Residues 204–239 form the UVR domain; the sequence is DQVLTQLIARMEKASQSLEFEEAARIRDQIQAVRRV. Residues 540–559 form a disordered region; it reads HAISGHRKKRAKVKSTSSLE. Residues 543-552 show a composition bias toward basic residues; it reads SGHRKKRAKV.

It belongs to the UvrC family. Interacts with UvrB in an incision complex.

The protein resides in the cytoplasm. Functionally, the UvrABC repair system catalyzes the recognition and processing of DNA lesions. UvrC both incises the 5' and 3' sides of the lesion. The N-terminal half is responsible for the 3' incision and the C-terminal half is responsible for the 5' incision. The chain is UvrABC system protein C from Klebsiella pneumoniae (strain 342).